The primary structure comprises 1132 residues: Major DNA-binding protein (1132 aa).

Positions 1103 to 1132 (VEELFPSPGVPSLTVGKKRKIASLLSDLDL) are required for nuclear localization.

Belongs to the herpesviridae major DNA-binding protein family. In terms of assembly, homooligomers. Forms double-helical filaments necessary for the formation of replication compartments within the host nucleus. Interacts with the origin-binding protein. Interacts with the helicase primase complex; this interaction stimulates primer synthesis activity of the helicase-primase complex. Interacts with the DNA polymerase. Interacts with the alkaline exonuclease; this interaction increases its nuclease processivity.

It is found in the host nucleus. In terms of biological role, plays several crucial roles in viral infection. Participates in the opening of the viral DNA origin to initiate replication by interacting with the origin-binding protein. May disrupt loops, hairpins and other secondary structures present on ssDNA to reduce and eliminate pausing of viral DNA polymerase at specific sites during elongation. Promotes viral DNA recombination by performing strand-transfer, characterized by the ability to transfer a DNA strand from a linear duplex to a complementary single-stranded DNA circle. Can also catalyze the renaturation of complementary single strands. Additionally, reorganizes the host cell nucleus, leading to the formation of prereplicative sites and replication compartments. This process is driven by the protein which can form double-helical filaments in the absence of DNA. The protein is Major DNA-binding protein of Human herpesvirus 8 type P (isolate GK18) (HHV-8).